A 301-amino-acid polypeptide reads, in one-letter code: Mas-related G-protein coupled receptor member A6 (301 aa).

Topologically, residues Met1–Met15 are extracellular. A helical membrane pass occupies residues Ile16–Phe36. The Cytoplasmic segment spans residues Arg37 to Ala42. Residues Phe43–Ile63 form a helical membrane-spanning segment. Residues Ala64 to Ser77 are Extracellular-facing. The chain crosses the membrane as a helical span at residues Ile78–Leu98. Topologically, residues Ser99–Cys128 are cytoplasmic. Residues Ala129–Leu149 form a helical membrane-spanning segment. Residues Asp150 to Asn163 are Extracellular-facing. The helical transmembrane segment at Phe164–Leu184 threads the bilayer. Residues Leu185–Thr203 lie on the Cytoplasmic side of the membrane. Residues Ile204–Leu224 form a helical membrane-spanning segment. Residues Leu225–Tyr240 lie on the Extracellular side of the membrane. Residues Leu241–Val261 form a helical membrane-spanning segment. Residues Gly262–Leu301 are Cytoplasmic-facing.

It belongs to the G-protein coupled receptor 1 family. Mas subfamily. Expressed in a subset of sensory neurons that includes nociceptors. Expressed in the subclass of non-peptidergic sensory neurons that are IB4(+) and VR1(-).

The protein resides in the cell membrane. In terms of biological role, orphan receptor. May be a receptor for RFamide-family neuropeptides such as NPFF and NPAF, which are analgesic in vivo. May regulate nociceptor function and/or development, including the sensation or modulation of pain. This Mus musculus (Mouse) protein is Mas-related G-protein coupled receptor member A6 (Mrgpra6).